The primary structure comprises 364 residues: tRNA 2-selenouridine synthase (364 aa).

The 124-residue stretch at 14-137 (LIADTPIIDV…LRQTAIQATI (124 aa)) folds into the Rhodanese domain. Cys97 functions as the S-selanylcysteine intermediate in the catalytic mechanism.

It belongs to the SelU family. Monomer.

The enzyme catalyses 5-methylaminomethyl-2-thiouridine(34) in tRNA + selenophosphate + (2E)-geranyl diphosphate + H2O + H(+) = 5-methylaminomethyl-2-selenouridine(34) in tRNA + (2E)-thiogeraniol + phosphate + diphosphate. It carries out the reaction 5-methylaminomethyl-2-thiouridine(34) in tRNA + (2E)-geranyl diphosphate = 5-methylaminomethyl-S-(2E)-geranyl-thiouridine(34) in tRNA + diphosphate. The catalysed reaction is 5-methylaminomethyl-S-(2E)-geranyl-thiouridine(34) in tRNA + selenophosphate + H(+) = 5-methylaminomethyl-2-(Se-phospho)selenouridine(34) in tRNA + (2E)-thiogeraniol. It catalyses the reaction 5-methylaminomethyl-2-(Se-phospho)selenouridine(34) in tRNA + H2O = 5-methylaminomethyl-2-selenouridine(34) in tRNA + phosphate. Its function is as follows. Involved in the post-transcriptional modification of the uridine at the wobble position (U34) of tRNA(Lys), tRNA(Glu) and tRNA(Gln). Catalyzes the conversion of 2-thiouridine (S2U-RNA) to 2-selenouridine (Se2U-RNA). Acts in a two-step process involving geranylation of 2-thiouridine (S2U) to S-geranyl-2-thiouridine (geS2U) and subsequent selenation of the latter derivative to 2-selenouridine (Se2U) in the tRNA chain. The protein is tRNA 2-selenouridine synthase of Escherichia coli (strain K12 / MC4100 / BW2952).